The primary structure comprises 745 residues: Probable GMP synthase [glutamine-hydrolyzing] (745 aa).

The tract at residues 1–37 (MKRSSSMLDINEDSQHSTNKAPPPKKAPEDRFDSANM) is disordered. The Glutamine amidotransferase type-1 domain occupies 60 to 252 (RIAILDFGAQ…LFKVVGCCGN (193 aa)). The active-site For GATase activity is C138. Residues H226 and E228 contribute to the active site. The 209-residue stretch at 253–461 (FTIQNREQSC…LGLPESIVQR (209 aa)) folds into the GMPS ATP-PPase domain. 280-286 (SGGVDSA) contributes to the ATP binding site. Positions 363, 563, 662, 737, and 743 each coordinate substrate.

Homodimer.

It catalyses the reaction XMP + L-glutamine + ATP + H2O = GMP + L-glutamate + AMP + diphosphate + 2 H(+). It participates in purine metabolism; GMP biosynthesis; GMP from XMP (L-Gln route): step 1/1. This is Probable GMP synthase [glutamine-hydrolyzing] (gmps-1) from Caenorhabditis elegans.